A 107-amino-acid polypeptide reads, in one-letter code: Auxin-responsive protein SAUR50 (107 aa).

This sequence belongs to the ARG7 family. As to quaternary structure, interacts with BZR1. Expressed in cotyledons, leaves, flowers and siliques.

Its subcellular location is the cell membrane. Provide a mechanistic link between auxin and plasma membrane H(+)-ATPases (PM H(+)-ATPases, e.g. AHA1 and AHA2), and triggers PM H(+)-ATPases activity by promoting phosphorylation of their C-terminal autoinhibitory domain as a result of PP2C-D subfamily of type 2C phosphatases inhibition, thus leading to the acidification of the apoplast and the facilitation of solutes and water uptake to drive cell expansion. Triggers plant growth probably by promoting cell elongation. Regulates branch angles and bending. Effector of hormonal and environmental signals in plant growth. The sequence is that of Auxin-responsive protein SAUR50 from Arabidopsis thaliana (Mouse-ear cress).